The primary structure comprises 366 residues: Galactose-1-phosphate uridylyltransferase (366 aa).

Residue Ser-27 is modified to Phosphoserine. Zn(2+) contacts are provided by Cys-54 and Cys-57. UDP-alpha-D-glucose is bound by residues Ala-63 and 79–80 (ND). His-124 lines the Zn(2+) pocket. Asn-169 is a UDP-alpha-D-glucose binding site. His-180 is a Zn(2+) binding site. His-182 acts as the Tele-UMP-histidine intermediate in catalysis. Gln-184 contacts UDP-alpha-D-glucose. Positions 198, 297, 314, and 316 each coordinate Fe cation. Residues 329 to 332 (KFLV) and 334 to 335 (FE) contribute to the UDP-alpha-D-glucose site.

This sequence belongs to the galactose-1-phosphate uridylyltransferase type 1 family. Homodimer. It depends on Zn(2+) as a cofactor.

The catalysed reaction is alpha-D-galactose 1-phosphate + UDP-alpha-D-glucose = alpha-D-glucose 1-phosphate + UDP-alpha-D-galactose. It participates in carbohydrate metabolism; galactose metabolism. The chain is Galactose-1-phosphate uridylyltransferase (GAL7) from Saccharomyces cerevisiae (strain ATCC 204508 / S288c) (Baker's yeast).